Consider the following 98-residue polypeptide: NADH-ubiquinone oxidoreductase chain 4L (98 aa).

3 consecutive transmembrane segments (helical) span residues 1–21 (MPSI…GTLI), 26–46 (LMSS…LTSL), and 61–81 (IILL…LVMV).

It belongs to the complex I subunit 4L family. As to quaternary structure, core subunit of respiratory chain NADH dehydrogenase (Complex I) which is composed of 45 different subunits.

It is found in the mitochondrion inner membrane. It carries out the reaction a ubiquinone + NADH + 5 H(+)(in) = a ubiquinol + NAD(+) + 4 H(+)(out). Its function is as follows. Core subunit of the mitochondrial membrane respiratory chain NADH dehydrogenase (Complex I) which catalyzes electron transfer from NADH through the respiratory chain, using ubiquinone as an electron acceptor. Part of the enzyme membrane arm which is embedded in the lipid bilayer and involved in proton translocation. The chain is NADH-ubiquinone oxidoreductase chain 4L (MT-ND4L) from Otolemur crassicaudatus (Brown greater galago).